The primary structure comprises 51 residues: ATP synthase subunit epsilon-like protein, mitochondrial (51 aa).

The residue at position 21 (lysine 21) is an N6-acetyllysine.

The protein belongs to the eukaryotic ATPase epsilon family. As to quaternary structure, F-type ATPases have 2 components, CF(1) - the catalytic core - and CF(0) - the membrane proton channel. CF(1) has five subunits: alpha(3), beta(3), gamma(1), delta(1), epsilon(1). CF(0) seems to have nine subunits: a, b, c, d, e, f, g, F6 and 8 (or A6L).

The protein resides in the mitochondrion inner membrane. In terms of biological role, mitochondrial membrane ATP synthase (F(1)F(0) ATP synthase or Complex V) produces ATP from ADP in the presence of a proton gradient across the membrane which is generated by electron transport complexes of the respiratory chain. F-type ATPases consist of two structural domains, F(1) - containing the extramembraneous catalytic core, and F(0) - containing the membrane proton channel, linked together by a central stalk and a peripheral stalk. During catalysis, ATP synthesis in the catalytic domain of F(1) is coupled via a rotary mechanism of the central stalk subunits to proton translocation. Part of the complex F(1) domain and of the central stalk which is part of the complex rotary element. Rotation of the central stalk against the surrounding alpha(3)beta(3) subunits leads to hydrolysis of ATP in three separate catalytic sites on the beta subunits. This Homo sapiens (Human) protein is ATP synthase subunit epsilon-like protein, mitochondrial.